Reading from the N-terminus, the 129-residue chain is Large ribosomal subunit protein bL19 (129 aa).

It belongs to the bacterial ribosomal protein bL19 family.

In terms of biological role, this protein is located at the 30S-50S ribosomal subunit interface and may play a role in the structure and function of the aminoacyl-tRNA binding site. In Rhizorhabdus wittichii (strain DSM 6014 / CCUG 31198 / JCM 15750 / NBRC 105917 / EY 4224 / RW1) (Sphingomonas wittichii), this protein is Large ribosomal subunit protein bL19.